A 115-amino-acid chain; its full sequence is Ribonuclease P protein component (115 aa).

This sequence belongs to the RnpA family. Consists of a catalytic RNA component (M1 or rnpB) and a protein subunit.

It carries out the reaction Endonucleolytic cleavage of RNA, removing 5'-extranucleotides from tRNA precursor.. In terms of biological role, RNaseP catalyzes the removal of the 5'-leader sequence from pre-tRNA to produce the mature 5'-terminus. It can also cleave other RNA substrates such as 4.5S RNA. The protein component plays an auxiliary but essential role in vivo by binding to the 5'-leader sequence and broadening the substrate specificity of the ribozyme. The polypeptide is Ribonuclease P protein component (Bacillus cereus (strain 03BB102)).